A 164-amino-acid polypeptide reads, in one-letter code: Zinc finger A20 and AN1 domain-containing stress-associated protein 1 (164 aa).

The A20-type zinc-finger motif lies at 16–50; the sequence is APEITLCANSCGFPGNPATQNLCQNCFLAATASTS. Cys22, Cys26, Cys38, and Cys41 together coordinate Zn(2+). The segment covering 48 to 58 has biased composition (low complexity); sequence STSSPSSLSSP. Residues 48-81 are disordered; the sequence is STSSPSSLSSPVLDKQPPRPAAPLVEPQAPLPPP. The AN1-type zinc finger occupies 99-145; that stretch reads TSAVNRCSRCRKRVGLTGFRCRCGHLFCGEHRYSDRHGCSYDYKSAA. Residues Cys105, Cys108, Cys119, Cys121, Cys126, His129, His135, and Cys137 each coordinate Zn(2+).

Functionally, may be involved in environmental stress response. This chain is Zinc finger A20 and AN1 domain-containing stress-associated protein 1 (SAP1), found in Oryza sativa subsp. indica (Rice).